A 479-amino-acid chain; its full sequence is Serine--tRNA ligase, mitochondrial (479 aa).

Residues 1–42 constitute a mitochondrion transit peptide; that stretch reads MRLTNRRFSTFLGNALPSKKKGFIFMSQLLYLRTFSTHTSYL. 287–289 is a binding site for L-serine; that stretch reads TAE. 317-319 is a binding site for ATP; that stretch reads RRE. Residue Glu-340 participates in L-serine binding. ATP is bound at residue 404–407; that stretch reads EITS. Thr-438 is a binding site for L-serine.

This sequence belongs to the class-II aminoacyl-tRNA synthetase family. Type-1 seryl-tRNA synthetase subfamily. Homodimer. The tRNA molecule probably binds across the dimer.

Its subcellular location is the mitochondrion matrix. The enzyme catalyses tRNA(Ser) + L-serine + ATP = L-seryl-tRNA(Ser) + AMP + diphosphate + H(+). Functionally, catalyzes the attachment of serine to tRNA(Ser). Is also probably able to aminoacylate tRNA(Sec) with serine, to form the misacylated tRNA L-seryl-tRNA(Sec), which will be further converted into selenocysteinyl-tRNA(Sec). This chain is Serine--tRNA ligase, mitochondrial (dia4), found in Schizosaccharomyces pombe (strain 972 / ATCC 24843) (Fission yeast).